Here is a 224-residue protein sequence, read N- to C-terminus: ATP-dependent dethiobiotin synthetase BioD (224 aa).

12-17 (GVGKTF) serves as a coordination point for ATP. Position 16 (threonine 16) interacts with Mg(2+). Residue lysine 37 is part of the active site. Threonine 41 provides a ligand contact to substrate. Residues asparagine 52, 107 to 110 (EGAG), 167 to 168 (GS), 197 to 199 (PEG), and glutamate 204 contribute to the ATP site. Residues asparagine 52 and glutamate 107 each coordinate Mg(2+).

It belongs to the dethiobiotin synthetase family. In terms of assembly, homodimer. Mg(2+) is required as a cofactor.

The protein resides in the cytoplasm. The enzyme catalyses (7R,8S)-7,8-diammoniononanoate + CO2 + ATP = (4R,5S)-dethiobiotin + ADP + phosphate + 3 H(+). It participates in cofactor biosynthesis; biotin biosynthesis; biotin from 7,8-diaminononanoate: step 1/2. Functionally, catalyzes a mechanistically unusual reaction, the ATP-dependent insertion of CO2 between the N7 and N8 nitrogen atoms of 7,8-diaminopelargonic acid (DAPA, also called 7,8-diammoniononanoate) to form a ureido ring. This Corynebacterium glutamicum (strain ATCC 13032 / DSM 20300 / JCM 1318 / BCRC 11384 / CCUG 27702 / LMG 3730 / NBRC 12168 / NCIMB 10025 / NRRL B-2784 / 534) protein is ATP-dependent dethiobiotin synthetase BioD.